Reading from the N-terminus, the 489-residue chain is FK506-binding protein 4 (489 aa).

2 disordered regions span residues 40–157 and 199–378; these read PDET…GLEL and GNYV…TTGT. The segment covering 66–88 has biased composition (acidic residues); it reads MDIDESDDDYEEDSEEDSDDEEI. A compositionally biased stretch (basic and acidic residues) spans 93–109; it reads SDKEKARKLKEAAALKE. Acidic residues-rich tracts occupy residues 110 to 125, 143 to 157, and 208 to 250; these read LEDEDEDDDSEGDDEN, TDDDEDDESDEGLEL, and GPSE…DELD. Composition is skewed to basic and acidic residues over residues 267–282, 292–303, and 328–353; these read APKLVESKGKNKRTAD, MMAKDGKAKGAD, and EQKKEAKVAKEGKEGKEGKEAKEAKK. The span at 362–378 shows a compositional bias: polar residues; sequence QGPTPSGQKPGETTTGT. The PPIase FKBP-type domain maps to 406–489; the sequence is VAMRYIGKLE…IFDVKLLEIK (84 aa).

It belongs to the FKBP-type PPIase family. FKBP3/4 subfamily. As to quaternary structure, binds to histones H3 and H4.

The protein localises to the nucleus. The catalysed reaction is [protein]-peptidylproline (omega=180) = [protein]-peptidylproline (omega=0). Its activity is regulated as follows. Inhibited by both FK506 and rapamycin. Functionally, PPIase that acts as a histone chaperone. Histone proline isomerase that increases the rate of cis-trans isomerization at prolines on the histone H3 N-terminal tail. Proline isomerization influences H3 methylation thereby regulating gene expression. This chain is FK506-binding protein 4 (fpr4), found in Aspergillus fumigatus (strain ATCC MYA-4609 / CBS 101355 / FGSC A1100 / Af293) (Neosartorya fumigata).